The sequence spans 208 residues: Superoxide dismutase [Mn] 2 (208 aa).

Residues His28, His83, Asp165, and His169 each contribute to the Mn(2+) site.

This sequence belongs to the iron/manganese superoxide dismutase family. Homodimer. Mn(2+) serves as cofactor.

The catalysed reaction is 2 superoxide + 2 H(+) = H2O2 + O2. Destroys superoxide anion radicals which are normally produced within the cells and which are toxic to biological systems. This chain is Superoxide dismutase [Mn] 2 (sodA2), found in Bacillus anthracis.